We begin with the raw amino-acid sequence, 233 residues long: Probable 2-phosphosulfolactate phosphatase (233 aa).

It belongs to the ComB family. The cofactor is Mg(2+).

It catalyses the reaction (2R)-O-phospho-3-sulfolactate + H2O = (2R)-3-sulfolactate + phosphate. This Symbiobacterium thermophilum (strain DSM 24528 / JCM 14929 / IAM 14863 / T) protein is Probable 2-phosphosulfolactate phosphatase.